Consider the following 239-residue polypeptide: Exosome complex component Rrp4 (239 aa).

One can recognise an S1 motif domain in the interval 67–139 (GDFVVGIVEE…PVQRVELSLL (73 aa)). The KH domain occupies 151 to 217 (QGGQVVEIDP…LAVRAIREIE (67 aa)).

This sequence belongs to the RRP4 family. In terms of assembly, component of the archaeal exosome complex. Forms a trimer of Rrp4 and/or Csl4 subunits. The trimer associates with a hexameric ring-like arrangement composed of 3 Rrp41-Rrp42 heterodimers.

It localises to the cytoplasm. Functionally, non-catalytic component of the exosome, which is a complex involved in RNA degradation. Increases the RNA binding and the efficiency of RNA degradation. Confers strong poly(A) specificity to the exosome. The protein is Exosome complex component Rrp4 of Methanopyrus kandleri (strain AV19 / DSM 6324 / JCM 9639 / NBRC 100938).